We begin with the raw amino-acid sequence, 222 residues long: NADH dehydrogenase [ubiquinone] iron-sulfur protein 8-B, mitochondrial (222 aa).

4Fe-4S ferredoxin-type domains are found at residues 114 to 143 (RRYP…IEAE) and 153 to 182 (TRYD…EGPN). [4Fe-4S] cluster-binding residues include C123, C126, C129, C133, C162, C165, C168, and C172.

This sequence belongs to the complex I 23 kDa subunit family. In terms of assembly, complex I is composed of at least 49 different subunits. This is a component of the iron-sulfur (IP) fragment of the enzyme. The cofactor is [4Fe-4S] cluster.

Its subcellular location is the mitochondrion. The enzyme catalyses a ubiquinone + NADH + 5 H(+)(in) = a ubiquinol + NAD(+) + 4 H(+)(out). Its function is as follows. Core subunit of the mitochondrial membrane respiratory chain NADH dehydrogenase (Complex I) that is believed to belong to the minimal assembly required for catalysis. Complex I functions in the transfer of electrons from NADH to the respiratory chain. The immediate electron acceptor for the enzyme is believed to be ubiquinone. May donate electrons to ubiquinone. The polypeptide is NADH dehydrogenase [ubiquinone] iron-sulfur protein 8-B, mitochondrial (Arabidopsis thaliana (Mouse-ear cress)).